Reading from the N-terminus, the 461-residue chain is Transforming growth factor beta-1-induced transcript 1 protein (461 aa).

An N-acetylmethionine modification is found at methionine 1. The interval 1-86 is disordered; sequence MEDLDALLSD…PPFSSSSGVL (86 aa). The tract at residues 1-200 is transcription activation; it reads MEDLDALLSD…GCPSPPGQTN (200 aa). Positions 1 to 240 are interaction with PTK2B/PYK2; that stretch reads MEDLDALLSD…CNKPIAGQVV (240 aa). The LD motif 1 motif lies at 3–15; that stretch reads DLDALLSDLETTT. Threonine 33 is subject to Phosphothreonine. Residue tyrosine 38 is modified to Phosphotyrosine. Residues 41-52 are compositionally biased toward polar residues; that stretch reads QPQTGSGESSGA. Residue tyrosine 60 is modified to Phosphotyrosine; by FAK2 and FYN. Serine 68 carries the phosphoserine modification. The span at 69–83 shows a compositional bias: low complexity; that stretch reads PKSVAPVAPPFSSSS. Residues 83 to 136 are interaction with PTK2/FAK1; the sequence is SGVLGNGLCELDRLLQELNATQFNITDEIMSQFPSSKMAEGEGKEDQSEDKSIT. The LD motif 2 signature appears at 92–104; sequence ELDRLLQELNATQ. Residues 116–154 form a disordered region; it reads PSSKMAEGEGKEDQSEDKSITTVPSSTFPAPSKPSATSA. Over residues 121-134 the composition is skewed to basic and acidic residues; sequence AEGEGKEDQSEDKS. The segment covering 135–154 has biased composition (polar residues); it reads ITTVPSSTFPAPSKPSATSA. Phosphoserine occurs at positions 140, 141, 164, and 186. Positions 157–168 match the LD motif 3 motif; it reads ELDRLMASLSDF. Positions 171 to 204 are disordered; that stretch reads QNHLPASGPPQPPAVSPTREGCPSPPGQTNKGSL. Residue threonine 188 is modified to Phosphothreonine. At serine 194 the chain carries Phosphoserine. Positions 203 to 215 match the LD motif 4 motif; it reads SLDTMLGLLQSDL. 4 LIM zinc-binding domains span residues 226-285, 286-343, 344-403, and 404-461; these read GLCG…RFSP, RCGF…QLFA, PRCQ…QRGS, and LCAT…KLFG. The residue at position 403 (serine 403) is a Phosphoserine. Residue threonine 407 is modified to Phosphothreonine.

It belongs to the paxillin family. As to quaternary structure, homooligomer. Interacts with PPARG. Interacts with TRAF4. Interacts with CRIP2. Interacts with HSPB1. Interacts with ILK. Interacts with LIMS1 and LIMS2. Interacts with NCK2. Interacts with NUDT16L1. Interacts with PAK. Interacts with PTPN12. Interacts with TCF3. Interacts with TCF7L2. Interacts with VCL. Interacts (via LD motif 3) with GIT1. Also interacts with GIT2. Forms a complex with ARHGEF7. Interacts with AR/androgen receptor in a ligand-dependent manner. Interacts with CSK. Interacts with PTK2/FAK1 and PTK2B/PYK2. Interacts with SLC6A3 and SLC6A4. Interacts with NR3C1. Interacts with SMAD3. Interacts with MAPK15. Interacts with SRC. Interacts with LYN. Interacts with talin. Interacts (via LIM zinc-binding domain 2) with CBLC (via RING-type zinc finger); the interaction is direct and enhances CBLC E3 ubiquitin-protein ligase activity. Interacts with PARVA. Interacts with PXN. Post-translationally, phosphorylated by gonadotropin-releasing hormone-activated SRC. Strongly expressed in large intestine, lung, spleen, testis, uterus and to a lower extent in brain, kidney and liver (at protein level). In brain, expressed by neuronal and non neuronal cells (at protein level).

It localises to the cell junction. The protein localises to the focal adhesion. The protein resides in the nucleus matrix. It is found in the cytoplasm. Its subcellular location is the cytoskeleton. Functionally, functions as a molecular adapter coordinating multiple protein-protein interactions at the focal adhesion complex and in the nucleus. Links various intracellular signaling modules to plasma membrane receptors and regulates the Wnt and TGFB signaling pathways. May also regulate SLC6A3 and SLC6A4 targeting to the plasma membrane hence regulating their activity. In the nucleus, functions as a nuclear receptor coactivator regulating glucocorticoid, androgen, mineralocorticoid and progesterone receptor transcriptional activity. May play a role in the processes of cell growth, proliferation, migration, differentiation and senescence. May have a zinc-dependent DNA-binding activity. This chain is Transforming growth factor beta-1-induced transcript 1 protein (Tgfb1i1), found in Rattus norvegicus (Rat).